The following is a 187-amino-acid chain: ATP synthase subunit b 2 (187 aa).

The tract at residues 1-25 (MAESHGGAKGPAAGAHTGAEGGHGG) is disordered. Residues 39–59 (LVSLAIFFVVLYVIVSKLALP) traverse the membrane as a helical segment. The interval 103 to 122 (RAQAIGNESRDKANAQAETE) is disordered. A compositionally biased stretch (basic and acidic residues) spans 110–122 (ESRDKANAQAETE).

Belongs to the ATPase B chain family. As to quaternary structure, F-type ATPases have 2 components, F(1) - the catalytic core - and F(0) - the membrane proton channel. F(1) has five subunits: alpha(3), beta(3), gamma(1), delta(1), epsilon(1). F(0) has three main subunits: a(1), b(2) and c(10-14). The alpha and beta chains form an alternating ring which encloses part of the gamma chain. F(1) is attached to F(0) by a central stalk formed by the gamma and epsilon chains, while a peripheral stalk is formed by the delta and b chains.

It is found in the cell inner membrane. Functionally, f(1)F(0) ATP synthase produces ATP from ADP in the presence of a proton or sodium gradient. F-type ATPases consist of two structural domains, F(1) containing the extramembraneous catalytic core and F(0) containing the membrane proton channel, linked together by a central stalk and a peripheral stalk. During catalysis, ATP synthesis in the catalytic domain of F(1) is coupled via a rotary mechanism of the central stalk subunits to proton translocation. Component of the F(0) channel, it forms part of the peripheral stalk, linking F(1) to F(0). The b'-subunit is a diverged and duplicated form of b found in plants and photosynthetic bacteria. The polypeptide is ATP synthase subunit b 2 (atpF2) (Bradyrhizobium diazoefficiens (strain JCM 10833 / BCRC 13528 / IAM 13628 / NBRC 14792 / USDA 110)).